The following is a 530-amino-acid chain: Neutral amino acid transporter A (530 aa).

N-acetylmethionine is present on M1. Polar residues predominate over residues 1–10 (MEKSSETNGY). The segment at 1–28 (MEKSSETNGYLDSAQEGPAAGPGEPGTT) is disordered. The Cytoplasmic portion of the chain corresponds to 1–41 (MEKSSETNGYLDSAQEGPAAGPGEPGTTARRAGRCAGFLRR). A compositionally biased stretch (low complexity) spans 16–28 (EGPAAGPGEPGTT). The next 3 helical transmembrane spans lie at 42-62 (HGLVLLTVSGVVAGAGLGAAL), 88-108 (MIILPLVVCSLVSGAASLDAS), and 119-139 (AYFGLTTLGASALAVALAFII). Residues 140-216 (KPGSGSQTLQ…VTIEKIPIGT (77 aa)) lie on the Extracellular side of the membrane. N201 carries an N-linked (GlcNAc...) asparagine glycan. Transmembrane regions (helical) follow at residues 217-237 (EIEGMNILGLVLFALVLGVAL), 257-277 (ATMVLVSWIMWYVPVGIMFLV), 298-318 (IFTSILGHFIHGGIVLPLIYF), 328-348 (FLLGLLTPFATAFATCSSSAT), 373-393 (IGATVNMDGAAIFQCVAAVFI), and 418-438 (VGAAGVPAGGVLTIAIILEAI). The tract at residues 488-530 (ELSEVKVEAIPNSKSEEETSPLVTHPNPTGPAASTPESKESVL) is disordered. Residues S507, S525, and S528 each carry the phosphoserine modification.

This sequence belongs to the dicarboxylate/amino acid:cation symporter (DAACS) (TC 2.A.23) family. SLC1A4 subfamily.

It is found in the membrane. Its subcellular location is the melanosome. It carries out the reaction L-threonine(in) + Na(+)(in) = L-threonine(out) + Na(+)(out). The catalysed reaction is L-serine(in) + Na(+)(in) = L-serine(out) + Na(+)(out). It catalyses the reaction L-cysteine(in) + Na(+)(in) = L-cysteine(out) + Na(+)(out). The enzyme catalyses L-alanine(in) + Na(+)(in) = L-alanine(out) + Na(+)(out). It carries out the reaction L-proline(in) + Na(+)(in) = L-proline(out) + Na(+)(out). The catalysed reaction is 4-hydroxy-L-proline(in) + Na(+)(in) = 4-hydroxy-L-proline(out) + Na(+)(out). Functionally, sodium-dependent neutral amino-acid transporter that mediates transport of alanine, serine, cysteine, proline, hydroxyproline and threonine. The chain is Neutral amino acid transporter A (SLC1A4) from Bos taurus (Bovine).